The sequence spans 155 residues: Small ribosomal subunit protein uS7 (155 aa).

It belongs to the universal ribosomal protein uS7 family. In terms of assembly, part of the 30S ribosomal subunit. Contacts proteins S9 and S11.

In terms of biological role, one of the primary rRNA binding proteins, it binds directly to 16S rRNA where it nucleates assembly of the head domain of the 30S subunit. Is located at the subunit interface close to the decoding center, probably blocks exit of the E-site tRNA. This is Small ribosomal subunit protein uS7 from Mesoplasma florum (strain ATCC 33453 / NBRC 100688 / NCTC 11704 / L1) (Acholeplasma florum).